Reading from the N-terminus, the 685-residue chain is DNA ligase (685 aa).

NAD(+) contacts are provided by residues D47–D51, S96–L97, and E125. The N6-AMP-lysine intermediate role is filled by K127. NAD(+)-binding residues include R148, E185, K304, and K328. Positions 422, 425, 440, and 446 each coordinate Zn(2+). Residues A605–R685 form the BRCT domain.

This sequence belongs to the NAD-dependent DNA ligase family. LigA subfamily. The cofactor is Mg(2+). Mn(2+) is required as a cofactor.

It carries out the reaction NAD(+) + (deoxyribonucleotide)n-3'-hydroxyl + 5'-phospho-(deoxyribonucleotide)m = (deoxyribonucleotide)n+m + AMP + beta-nicotinamide D-nucleotide.. DNA ligase that catalyzes the formation of phosphodiester linkages between 5'-phosphoryl and 3'-hydroxyl groups in double-stranded DNA using NAD as a coenzyme and as the energy source for the reaction. It is essential for DNA replication and repair of damaged DNA. The polypeptide is DNA ligase (Shewanella putrefaciens (strain CN-32 / ATCC BAA-453)).